A 400-amino-acid polypeptide reads, in one-letter code: LIM/homeobox protein Lhx3 (400 aa).

2 consecutive LIM zinc-binding domains span residues 34–84 and 93–147; these read CAGC…CKDD and CAAC…CKAD. Ser-74 is modified (phosphoserine). The segment at residues 160-219 is a DNA-binding region (homeobox); that stretch reads AKRPRTTITAKQLETLKSAYNTSPKPARHVREQLSSETGLDMRVVQVWFQNRRAKEKRLK. Disordered regions lie at residues 215–280 and 297–400; these read EKRL…SSLG and TLDH…HAQF. The residue at position 230 (Tyr-230) is a Phosphotyrosine. A phosphoserine mark is found at Ser-237 and Ser-241. 2 stretches are compositionally biased toward pro residues: residues 319-334 and 352-361; these read GIPPSPAAPQSLPGPQ and SGPPGGPPPM. Residues 368–380 show a composition bias toward polar residues; sequence GPSSDLSTESSSG.

As to quaternary structure, interacts with POU1F1. At neuronal promoters, interacts with LDB1, in motor neurons LDB1 is displaced by ISL1 and a ternary complex is formed in which ISL1 contacts both LHX3 and LDB1; allosteric structural changes in the DNA binding domain of LHX3, induced by the ISL1-LHX3 interaction, may explain differences in sequence specificity of the different complexes. Interacts with LDB2. May interact with CITED2/MRG1. In terms of tissue distribution, mostly expressed in the pituitary anterior and intermediate lobes. It is also expressed in the pineal gland and transiently in the primordia of motor neurons including the spinal cord, pons and medulla oblongata.

It is found in the nucleus. Functionally, transcription factor. Recognizes and binds to the consensus sequence motif 5'-AATTAATTA-3' in the regulatory elements of target genes, such as glycoprotein hormones alpha chain CGA and visual system homeobox CHX10, positively modulating transcription; transcription can be co-activated by LDB2. Synergistically enhances transcription from the prolactin promoter in cooperation with POU1F1/Pit-1. Required for the establishment of the specialized cells of the pituitary gland and the nervous system. Involved in the development of interneurons and motor neurons in cooperation with LDB1 and ISL1. The sequence is that of LIM/homeobox protein Lhx3 (Lhx3) from Mus musculus (Mouse).